A 115-amino-acid polypeptide reads, in one-letter code: UPF0738 protein SE_0694 (115 aa).

It belongs to the UPF0738 family.

This Staphylococcus epidermidis (strain ATCC 12228 / FDA PCI 1200) protein is UPF0738 protein SE_0694.